Reading from the N-terminus, the 1517-residue chain is DNA-directed RNA polymerase subunit beta' (1517 aa).

The Zn(2+) site is built by Cys71, Cys73, Cys86, and Cys89. 3 residues coordinate Mg(2+): Asp482, Asp484, and Asp486. Zn(2+)-binding residues include Cys812, Cys886, Cys893, and Cys896.

The protein belongs to the RNA polymerase beta' chain family. The RNAP catalytic core consists of 2 alpha, 1 beta, 1 beta' and 1 omega subunit. When a sigma factor is associated with the core the holoenzyme is formed, which can initiate transcription. Requires Mg(2+) as cofactor. Zn(2+) is required as a cofactor.

The enzyme catalyses RNA(n) + a ribonucleoside 5'-triphosphate = RNA(n+1) + diphosphate. Its function is as follows. DNA-dependent RNA polymerase catalyzes the transcription of DNA into RNA using the four ribonucleoside triphosphates as substrates. This chain is DNA-directed RNA polymerase subunit beta', found in Campylobacter jejuni subsp. jejuni serotype O:2 (strain ATCC 700819 / NCTC 11168).